The sequence spans 410 residues: Arginine deiminase (410 aa).

Catalysis depends on cysteine 400, which acts as the Amidino-cysteine intermediate.

Belongs to the arginine deiminase family.

It is found in the cytoplasm. The enzyme catalyses L-arginine + H2O = L-citrulline + NH4(+). It functions in the pathway amino-acid degradation; L-arginine degradation via ADI pathway; carbamoyl phosphate from L-arginine: step 1/2. This is Arginine deiminase from Streptococcus uberis (strain ATCC BAA-854 / 0140J).